Consider the following 202-residue polypeptide: 3-isopropylmalate dehydratase small subunit (202 aa).

It belongs to the LeuD family. LeuD type 1 subfamily. In terms of assembly, heterodimer of LeuC and LeuD.

The enzyme catalyses (2R,3S)-3-isopropylmalate = (2S)-2-isopropylmalate. It participates in amino-acid biosynthesis; L-leucine biosynthesis; L-leucine from 3-methyl-2-oxobutanoate: step 2/4. In terms of biological role, catalyzes the isomerization between 2-isopropylmalate and 3-isopropylmalate, via the formation of 2-isopropylmaleate. In Blochmanniella pennsylvanica (strain BPEN), this protein is 3-isopropylmalate dehydratase small subunit.